Here is a 311-residue protein sequence, read N- to C-terminus: tRNA-cytidine(32) 2-sulfurtransferase (311 aa).

The PP-loop motif motif lies at Ser-47–Ser-52. Cys-122, Cys-125, and Cys-213 together coordinate [4Fe-4S] cluster.

Belongs to the TtcA family. As to quaternary structure, homodimer. The cofactor is Mg(2+). [4Fe-4S] cluster serves as cofactor.

The protein resides in the cytoplasm. It carries out the reaction cytidine(32) in tRNA + S-sulfanyl-L-cysteinyl-[cysteine desulfurase] + AH2 + ATP = 2-thiocytidine(32) in tRNA + L-cysteinyl-[cysteine desulfurase] + A + AMP + diphosphate + H(+). It functions in the pathway tRNA modification. In terms of biological role, catalyzes the ATP-dependent 2-thiolation of cytidine in position 32 of tRNA, to form 2-thiocytidine (s(2)C32). The sulfur atoms are provided by the cysteine/cysteine desulfurase (IscS) system. This Salmonella choleraesuis (strain SC-B67) protein is tRNA-cytidine(32) 2-sulfurtransferase.